Reading from the N-terminus, the 356-residue chain is Cobalt-precorrin-5B C(1)-methyltransferase (356 aa).

It belongs to the CbiD family.

It catalyses the reaction Co-precorrin-5B + S-adenosyl-L-methionine = Co-precorrin-6A + S-adenosyl-L-homocysteine. The protein operates within cofactor biosynthesis; adenosylcobalamin biosynthesis; cob(II)yrinate a,c-diamide from sirohydrochlorin (anaerobic route): step 6/10. Functionally, catalyzes the methylation of C-1 in cobalt-precorrin-5B to form cobalt-precorrin-6A. The protein is Cobalt-precorrin-5B C(1)-methyltransferase of Citrifermentans bemidjiense (strain ATCC BAA-1014 / DSM 16622 / JCM 12645 / Bem) (Geobacter bemidjiensis).